Consider the following 514-residue polypeptide: 2-isopropylmalate synthase (514 aa).

Positions 5 to 268 (LIIFDTTLRD…DVGIDTTQIV (264 aa)) constitute a Pyruvate carboxyltransferase domain. Residues Asp14, His202, His204, and Asn239 each coordinate Mn(2+). Positions 395-514 (KFVSLSQHSE…KDDKLNPQRS (120 aa)) are regulatory domain.

Belongs to the alpha-IPM synthase/homocitrate synthase family. LeuA type 1 subfamily. In terms of assembly, homodimer. It depends on Mn(2+) as a cofactor.

It is found in the cytoplasm. It carries out the reaction 3-methyl-2-oxobutanoate + acetyl-CoA + H2O = (2S)-2-isopropylmalate + CoA + H(+). It participates in amino-acid biosynthesis; L-leucine biosynthesis; L-leucine from 3-methyl-2-oxobutanoate: step 1/4. In terms of biological role, catalyzes the condensation of the acetyl group of acetyl-CoA with 3-methyl-2-oxobutanoate (2-ketoisovalerate) to form 3-carboxy-3-hydroxy-4-methylpentanoate (2-isopropylmalate). This Burkholderia multivorans (strain ATCC 17616 / 249) protein is 2-isopropylmalate synthase.